The following is a 377-amino-acid chain: Actin-related protein 2/3 complex subunit 1 (377 aa).

5 WD repeats span residues 9–48 (ILPK…WKHA), 53–92 (DHDK…TWKQ), 98–139 (RLNR…WVSK), 144–183 (PLRS…VDAK), and 203–242 (PSGG…QPPR). The segment at 293-313 (GTSKTSFTHTGNTGEGREEEG) is disordered. The stretch at 342-376 (VHQNMIATLRPYAGTPGNITAFTSSGTDGRVVLWT) is one WD 6 repeat.

This sequence belongs to the WD repeat ARPC1 family. As to quaternary structure, component of the Arp2/3 complex composed of arp2, act2, arc1/p41-ARC, arc2/p34-ARC, arc3/p21-ARC, arc4/p20-ARC and arc5/p16-ARC.

It localises to the cytoplasm. Its subcellular location is the cytoskeleton. The protein resides in the actin patch. Functionally, functions as a component of the Arp2/3 complex which is involved in regulation of actin polymerization and together with an activating nucleation-promoting factor (NPF) mediates the formation of branched actin networks. This is Actin-related protein 2/3 complex subunit 1 (arc1) from Schizosaccharomyces pombe (strain 972 / ATCC 24843) (Fission yeast).